We begin with the raw amino-acid sequence, 83 residues long: Conotoxin LiCr95 (83 aa).

The first 22 residues, 1 to 22 (MKLTCALIVAMLFLTACQLTTT), serve as a signal peptide directing secretion. The propeptide occupies 23 to 50 (DDSRGRQKYPTERLRVKMRNPKLSKLTK). 3 disulfide bridges follow: Cys52–Cys67, Cys59–Cys71, and Cys66–Cys80.

The protein belongs to the conotoxin O1 superfamily. In terms of tissue distribution, expressed by the venom duct.

It localises to the secreted. This is Conotoxin LiCr95 from Conus lividus (Livid cone).